A 293-amino-acid polypeptide reads, in one-letter code: Extracellular metalloprotease MGYG_00389 (293 aa).

The first 19 residues, 1-19, serve as a signal peptide directing secretion; that stretch reads MRFSVFLPAIAALSSAVAA. N-linked (GlcNAc...) asparagine glycosylation is found at Asn-49 and Asn-53. His-184 is a binding site for Zn(2+). Glu-185 is an active-site residue. Residue His-188 coordinates Zn(2+). Cys-223 and Cys-249 are joined by a disulfide. The interval 270–293 is disordered; it reads GSGSGSVTRPRPKPPVLMDYEHRL.

It belongs to the peptidase M43B family.

It localises to the secreted. Functionally, secreted metalloproteinase that allows assimilation of proteinaceous substrates. Plays a pivotal role as a pathogenicity determinant during infections and contributes to the ability of the pathogen to persist within the mammalian host. The chain is Extracellular metalloprotease MGYG_00389 from Arthroderma gypseum (strain ATCC MYA-4604 / CBS 118893) (Microsporum gypseum).